A 64-amino-acid polypeptide reads, in one-letter code: Small, acid-soluble spore protein beta (64 aa).

It belongs to the alpha/beta-type SASP family.

Functionally, SASP are bound to spore DNA. They are double-stranded DNA-binding proteins that cause DNA to change to an a-like conformation. They protect the DNA backbone from chemical and enzymatic cleavage and are thus involved in dormant spore's high resistance to UV light. This is Small, acid-soluble spore protein beta from Paraclostridium bifermentans (Clostridium bifermentans).